The sequence spans 199 residues: RNA-free ribonuclease P (199 aa).

This sequence belongs to the HARP family.

The catalysed reaction is Endonucleolytic cleavage of RNA, removing 5'-extranucleotides from tRNA precursor.. RNA-free RNase P that catalyzes the removal of the 5'-leader sequence from pre-tRNA to produce the mature 5'-terminus. The chain is RNA-free ribonuclease P from Thermococcus onnurineus (strain NA1).